Here is a 351-residue protein sequence, read N- to C-terminus: Foldase protein PrsA 1 (351 aa).

Residues Met-1–Ala-22 form the signal peptide. Cys-23 carries N-palmitoyl cysteine lipidation. Cys-23 carries the S-diacylglycerol cysteine lipid modification. Residues Thr-145–Lys-240 enclose the PpiC domain. 2 stretches are compositionally biased toward low complexity: residues Lys-303–Ser-317 and Glu-326–Gln-351. The disordered stretch occupies residues Lys-303–Gln-351.

Belongs to the PrsA family.

It localises to the cell membrane. It catalyses the reaction [protein]-peptidylproline (omega=180) = [protein]-peptidylproline (omega=0). Functionally, plays a major role in protein secretion by helping the post-translocational extracellular folding of several secreted proteins. The polypeptide is Foldase protein PrsA 1 (prsA1) (Streptococcus pyogenes serotype M1).